The following is a 676-amino-acid chain: Beta-taxilin (676 aa).

Disordered stretches follow at residues 1 to 55 (MEND…DISE) and 71 to 131 (AASL…EQKL). Composition is skewed to polar residues over residues 8 to 25 (EKQQ…QGQS) and 34 to 45 (QPLSPTNQTSAQ). The span at 75-92 (VEKEGTTAETDKPEKEDV) shows a compositional bias: basic and acidic residues. The span at 93 to 105 (GSMEDAECEDVNE) shows a compositional bias: acidic residues. Positions 106-131 (ESEKDKPAPGDASRAKEPSASKEQKL) are enriched in basic and acidic residues. The stretch at 157 to 461 (EEKLDLLFKK…LYRKIKQAQL (305 aa)) forms a coiled coil. Positions 464–486 (EVNGNDILEEDDDANTNPSSSEQ) are disordered.

The protein belongs to the taxilin family. In terms of tissue distribution, specifically expressed in skeletal and cardiac muscle.

Its subcellular location is the cytoplasm. Promotes neurite-outgrowth. May be involved in intracellular vesicle traffic. This chain is Beta-taxilin (TXLNB), found in Gallus gallus (Chicken).